A 419-amino-acid polypeptide reads, in one-letter code: Mitochondrial chaperone BCS1 (419 aa).

Residues 1–15 are Mitochondrial intermembrane-facing; it reads MPLSDFVLALKDNPY. Residues 16–32 traverse the membrane as a helical segment; the sequence is FGAGFGLVGVGTALALA. Residues 33 to 419 are Mitochondrial matrix-facing; sequence RKGAQLGLVA…AIQNAESLRR (387 aa). Tyr181 is subject to Phosphotyrosine. 230–237 is a binding site for ATP; sequence GPPGCGKS.

The protein belongs to the AAA ATPase family. BCS1 subfamily. In terms of assembly, interacts with LETM1.

Its subcellular location is the mitochondrion inner membrane. It carries out the reaction ATP + H2O = ADP + phosphate + H(+). Chaperone necessary for the incorporation of Rieske iron-sulfur protein UQCRFS1 into the mitochondrial respiratory chain complex III. Plays an important role in the maintenance of mitochondrial tubular networks, respiratory chain assembly and formation of the LETM1 complex. This Bos taurus (Bovine) protein is Mitochondrial chaperone BCS1 (BCS1L).